The sequence spans 70 residues: Protein SlyX homolog (70 aa).

It belongs to the SlyX family.

The chain is Protein SlyX homolog from Nitrobacter winogradskyi (strain ATCC 25391 / DSM 10237 / CIP 104748 / NCIMB 11846 / Nb-255).